Here is a 357-residue protein sequence, read N- to C-terminus: 3-dehydroquinate synthase (357 aa).

Residues 126 to 127 (TT), Lys-139, and Lys-148 contribute to the NAD(+) site. Positions 181, 244, and 261 each coordinate Zn(2+).

Belongs to the sugar phosphate cyclases superfamily. Dehydroquinate synthase family. Co(2+) serves as cofactor. It depends on Zn(2+) as a cofactor. NAD(+) is required as a cofactor.

The protein resides in the cytoplasm. It catalyses the reaction 7-phospho-2-dehydro-3-deoxy-D-arabino-heptonate = 3-dehydroquinate + phosphate. Its pathway is metabolic intermediate biosynthesis; chorismate biosynthesis; chorismate from D-erythrose 4-phosphate and phosphoenolpyruvate: step 2/7. In terms of biological role, catalyzes the conversion of 3-deoxy-D-arabino-heptulosonate 7-phosphate (DAHP) to dehydroquinate (DHQ). This chain is 3-dehydroquinate synthase, found in Solibacter usitatus (strain Ellin6076).